We begin with the raw amino-acid sequence, 356 residues long: GTPase Obg (356 aa).

One can recognise an Obg domain in the interval 1–159; that stretch reads MKFLDEAKVY…RWIWLRMKLI (159 aa). An OBG-type G domain is found at 160–327; sequence ADAGLVGLPN…VLRALTDVIS (168 aa). Residues 166 to 173, 191 to 195, 212 to 215, 279 to 282, and 308 to 310 contribute to the GTP site; these read GLPNAGKS, FTTLH, DIPG, NKID, and SGV. Ser-173 and Thr-193 together coordinate Mg(2+). The segment at 329–356 is disordered; that stretch reads APVSTKAKGEPTENETPPPSTGWSPLSN.

This sequence belongs to the TRAFAC class OBG-HflX-like GTPase superfamily. OBG GTPase family. As to quaternary structure, monomer. The cofactor is Mg(2+).

The protein resides in the cytoplasm. An essential GTPase which binds GTP, GDP and possibly (p)ppGpp with moderate affinity, with high nucleotide exchange rates and a fairly low GTP hydrolysis rate. Plays a role in control of the cell cycle, stress response, ribosome biogenesis and in those bacteria that undergo differentiation, in morphogenesis control. The protein is GTPase Obg of Afipia carboxidovorans (strain ATCC 49405 / DSM 1227 / KCTC 32145 / OM5) (Oligotropha carboxidovorans).